The sequence spans 205 residues: Recombination protein RecR (205 aa).

The C4-type zinc finger occupies 59 to 74 (CSVCFHLSAEPVCEVC). Residues 82–181 (GTLCVVADSR…KVTRIAFGLP (100 aa)) form the Toprim domain.

This sequence belongs to the RecR family.

May play a role in DNA repair. It seems to be involved in an RecBC-independent recombinational process of DNA repair. It may act with RecF and RecO. The chain is Recombination protein RecR from Cyanothece sp. (strain PCC 7425 / ATCC 29141).